A 160-amino-acid polypeptide reads, in one-letter code: Endoribonuclease YbeY (160 aa).

Zn(2+)-binding residues include histidine 112, histidine 116, and histidine 122. A disordered region spans residues 141–160 (ELGHPDPYACDDEEPPSKEK).

The protein belongs to the endoribonuclease YbeY family. It depends on Zn(2+) as a cofactor.

The protein localises to the cytoplasm. Single strand-specific metallo-endoribonuclease involved in late-stage 70S ribosome quality control and in maturation of the 3' terminus of the 16S rRNA. This chain is Endoribonuclease YbeY, found in Pseudomonas aeruginosa (strain UCBPP-PA14).